A 300-amino-acid polypeptide reads, in one-letter code: Cyclic nucleotide synthase CdnE01 (300 aa).

Positions 63, 65, and 137 each coordinate Mg(2+).

The protein belongs to the CD-NTase family. E01 subfamily. Mg(2+) serves as cofactor.

Binds to and probably activated by a virus-derived, approximately 400 nucleotide RNA (called CBASS-activating bacteriophage RNA, cabRNA) that begins in the viral terminase subunit terS and extends into terL, as well as by a shorter RNA with part of the cabRNA sequence able to form a hairpin. RNA secondary and/or tertiary structure, as well as viral infection itself, are important for CdnE activation. Its function is as follows. Cyclic nucleotide synthase (second messenger synthase) of a CBASS antivirus system. CBASS (cyclic oligonucleotide-based antiphage signaling system) provides immunity against bacteriophage. The CD-NTase protein synthesizes cyclic nucleotides in response to infection; these serve as specific second messenger signals. The signals activate a diverse range of effectors, leading to bacterial cell death and thus abortive phage infection. A type I-B CBASS system. In terms of biological role, protects S.aureus against phage infection. When the CBASS operon (cdnE and the following gene) is introduced in S.aureus strain RN4220 there is strong protection against lytic DNA phages 80alpha-vir and phi-NM1-gamma-6 but little to no protection against phages phi-NM4-gamma-4 or phi-12-gamma-3. This is Cyclic nucleotide synthase CdnE01 from Staphylococcus haemolyticus.